Consider the following 158-residue polypeptide: Small ribosomal subunit protein uS9 (158 aa).

Belongs to the universal ribosomal protein uS9 family.

The chain is Small ribosomal subunit protein uS9 from Nitrobacter winogradskyi (strain ATCC 25391 / DSM 10237 / CIP 104748 / NCIMB 11846 / Nb-255).